The following is a 458-amino-acid chain: Flap endonuclease 1 (458 aa).

The N-domain stretch occupies residues 1–105 (MGIKGLTGLL…GVLSKRFEKR (105 aa)). Aspartate 34 serves as a coordination point for Mg(2+). Positions 47 and 71 each coordinate DNA. 5 residues coordinate Mg(2+): aspartate 87, glutamate 159, glutamate 161, aspartate 180, and aspartate 182. The interval 123-254 (DVDRFSRRTV…KSALKLIREF (132 aa)) is I-domain. DNA is bound at residue glutamate 159. DNA-binding residues include glycine 232 and aspartate 234. Aspartate 234 contacts Mg(2+). 2 disordered regions span residues 268 to 347 (AAAR…IPDE) and 416 to 458 (GFFT…AKKK). 2 stretches are compositionally biased toward acidic residues: residues 275 to 285 (AEEEDEEEAEE) and 293 to 309 (EMPD…DEEE). The span at 310–329 (AERRKKAEAAKKKKAQEKAK) shows a compositional bias: basic and acidic residues. Residues 410 to 418 (QQGRLDGFF) form an interaction with PCNA region. The segment covering 442-452 (RKGEDKAEGSG) has biased composition (basic and acidic residues).

The protein belongs to the XPG/RAD2 endonuclease family. FEN1 subfamily. As to quaternary structure, interacts with PCNA. Three molecules of FEN1 bind to one PCNA trimer with each molecule binding to one PCNA monomer. PCNA stimulates the nuclease activity without altering cleavage specificity. Mg(2+) serves as cofactor. Phosphorylated. Phosphorylation upon DNA damage induces relocalization to the nuclear plasma.

The protein localises to the nucleus. Its subcellular location is the nucleolus. It is found in the nucleoplasm. It localises to the mitochondrion. In terms of biological role, structure-specific nuclease with 5'-flap endonuclease and 5'-3' exonuclease activities involved in DNA replication and repair. During DNA replication, cleaves the 5'-overhanging flap structure that is generated by displacement synthesis when DNA polymerase encounters the 5'-end of a downstream Okazaki fragment. It enters the flap from the 5'-end and then tracks to cleave the flap base, leaving a nick for ligation. Also involved in the long patch base excision repair (LP-BER) pathway, by cleaving within the apurinic/apyrimidinic (AP) site-terminated flap. Acts as a genome stabilization factor that prevents flaps from equilibrating into structures that lead to duplications and deletions. Also possesses 5'-3' exonuclease activity on nicked or gapped double-stranded DNA, and exhibits RNase H activity. Also involved in replication and repair of rDNA and in repairing mitochondrial DNA. The chain is Flap endonuclease 1 from Coprinopsis cinerea (strain Okayama-7 / 130 / ATCC MYA-4618 / FGSC 9003) (Inky cap fungus).